The sequence spans 418 residues: Gamma-glutamyl phosphate reductase (418 aa).

It belongs to the gamma-glutamyl phosphate reductase family.

The protein resides in the cytoplasm. It carries out the reaction L-glutamate 5-semialdehyde + phosphate + NADP(+) = L-glutamyl 5-phosphate + NADPH + H(+). The protein operates within amino-acid biosynthesis; L-proline biosynthesis; L-glutamate 5-semialdehyde from L-glutamate: step 2/2. In terms of biological role, catalyzes the NADPH-dependent reduction of L-glutamate 5-phosphate into L-glutamate 5-semialdehyde and phosphate. The product spontaneously undergoes cyclization to form 1-pyrroline-5-carboxylate. The sequence is that of Gamma-glutamyl phosphate reductase from Halothermothrix orenii (strain H 168 / OCM 544 / DSM 9562).